Consider the following 172-residue polypeptide: S-ribosylhomocysteine lyase (172 aa).

Positions 54, 58, and 128 each coordinate Fe cation.

This sequence belongs to the LuxS family. In terms of assembly, homodimer. Requires Fe cation as cofactor.

The enzyme catalyses S-(5-deoxy-D-ribos-5-yl)-L-homocysteine = (S)-4,5-dihydroxypentane-2,3-dione + L-homocysteine. Involved in the synthesis of autoinducer 2 (AI-2) which is secreted by bacteria and is used to communicate both the cell density and the metabolic potential of the environment. The regulation of gene expression in response to changes in cell density is called quorum sensing. Catalyzes the transformation of S-ribosylhomocysteine (RHC) to homocysteine (HC) and 4,5-dihydroxy-2,3-pentadione (DPD). This is S-ribosylhomocysteine lyase from Photobacterium profundum (strain SS9).